The following is a 244-amino-acid chain: Methylthioribulose-1-phosphate dehydratase (244 aa).

Substrate is bound at residue cysteine 89. Positions 107 and 109 each coordinate Zn(2+). Glutamate 130 acts as the Proton donor/acceptor in catalysis. Histidine 192 lines the Zn(2+) pocket.

This sequence belongs to the aldolase class II family. MtnB subfamily. It depends on Zn(2+) as a cofactor.

The protein localises to the cytoplasm. It carries out the reaction 5-(methylsulfanyl)-D-ribulose 1-phosphate = 5-methylsulfanyl-2,3-dioxopentyl phosphate + H2O. Its pathway is amino-acid biosynthesis; L-methionine biosynthesis via salvage pathway; L-methionine from S-methyl-5-thio-alpha-D-ribose 1-phosphate: step 2/6. Its function is as follows. Catalyzes the dehydration of methylthioribulose-1-phosphate (MTRu-1-P) into 2,3-diketo-5-methylthiopentyl-1-phosphate (DK-MTP-1-P). The polypeptide is Methylthioribulose-1-phosphate dehydratase (Saccharomyces cerevisiae (strain AWRI1631) (Baker's yeast)).